The primary structure comprises 101 residues: Small ribosomal subunit protein uS14 (101 aa).

It belongs to the universal ribosomal protein uS14 family. Part of the 30S ribosomal subunit. Contacts proteins S3 and S10.

Its function is as follows. Binds 16S rRNA, required for the assembly of 30S particles and may also be responsible for determining the conformation of the 16S rRNA at the A site. The sequence is that of Small ribosomal subunit protein uS14 from Hydrogenovibrio crunogenus (strain DSM 25203 / XCL-2) (Thiomicrospira crunogena).